An 857-amino-acid polypeptide reads, in one-letter code: DNA mismatch repair protein MutS (857 aa).

Position 608–615 (Gly-608–Ser-615) interacts with ATP.

The protein belongs to the DNA mismatch repair MutS family.

Functionally, this protein is involved in the repair of mismatches in DNA. It is possible that it carries out the mismatch recognition step. This protein has a weak ATPase activity. This Lacticaseibacillus casei (strain BL23) (Lactobacillus casei) protein is DNA mismatch repair protein MutS.